A 464-amino-acid chain; its full sequence is ESX-1 secretion system protein EccE1 (464 aa).

The next 2 helical transmembrane spans lie at 11 to 31 (FTTG…AICM) and 34 to 54 (DLLW…VLTI).

It belongs to the EccE family. As to quaternary structure, part of the ESX-1 / type VII secretion system (T7SS), which is composed of cytosolic and membrane components. The ESX-1 membrane complex is composed of EccB1, EccCa1, EccCb1, EccD1 and EccE1.

It is found in the cell inner membrane. Functionally, part of the ESX-1 / type VII specialized secretion system (T7SS), which exports several proteins including EsxA and EsxB. Plays a role in DNA conjugation, in at least a donor strain. The chain is ESX-1 secretion system protein EccE1 from Mycolicibacterium smegmatis (strain ATCC 700084 / mc(2)155) (Mycobacterium smegmatis).